Consider the following 356-residue polypeptide: MNAILSDQKTFQAIIRVNQAIEDIRQGKMVVMVDDEDRENEGDLVYAASFSTPQKVNFMASHAKGLICVAISKKIANRLQLEPMVKKNDSSYETAFTITVDARTAATGISAGERDMTIKILADGGSHESELVRPGHIFPLIAKEGGALVRIGHTEGSVDLCRLAGQGDSAVICEIMKEDGTMARRPDLDIFCAKHELNIVYISDIVEYRMMNESLIRVIAESTTQFLGKDARRYDFVDHNDNHHIAYAFGNIKNRSAVKFHSIMPDNELLADTKKYNSLIQAIHYLQKSGGVLIFMDNGTQDMSKIREYGIGAQIIKHLGIENIELLSDSKNKEFVGISGFGLSVIKSTNVNETVA.

The interval 1-211 (MNAILSDQKT…ISDIVEYRMM (211 aa)) is DHBP synthase. D-ribulose 5-phosphate contacts are provided by residues 38–39 (RE), Asp-43, 150–154 (RIGHT), and Glu-174. Glu-39 lines the Mg(2+) pocket. Mg(2+) is bound at residue His-153. Residues 212–356 (NESLIRVIAE…KSTNVNETVA (145 aa)) form a GTP cyclohydrolase II-like region.

In the N-terminal section; belongs to the DHBP synthase family. This sequence in the C-terminal section; belongs to the GTP cyclohydrolase II family. Mg(2+) is required as a cofactor. Mn(2+) serves as cofactor.

It catalyses the reaction D-ribulose 5-phosphate = (2S)-2-hydroxy-3-oxobutyl phosphate + formate + H(+). Its pathway is cofactor biosynthesis; riboflavin biosynthesis; 2-hydroxy-3-oxobutyl phosphate from D-ribulose 5-phosphate: step 1/1. Catalyzes the conversion of D-ribulose 5-phosphate to formate and 3,4-dihydroxy-2-butanone 4-phosphate. The polypeptide is 3,4-dihydroxy-2-butanone 4-phosphate synthase (ribB) (Sulfurospirillum multivorans (Dehalospirillum multivorans)).